We begin with the raw amino-acid sequence, 280 residues long: Putative sugar uptake protein (280 aa).

The next 10 membrane-spanning stretches (helical) occupy residues 4–21, 33–52, 56–78, 91–113, 117–136, 149–166, 176–195, 207–229, 233–255, and 262–279; these read LIAL…LIAG, MGLG…IHPA, ITIF…GQFI, LSTG…EWTS, YLIG…LTAI, IILL…SSFP, LFLP…LLVS, WLNI…SAQL, ITAF…FFIG, and ELIA…GAAI.

Belongs to the GRP transporter (TC 2.A.7.5) family.

It is found in the cell membrane. In Lactobacillus helveticus (Lactobacillus suntoryeus), this protein is Putative sugar uptake protein.